The sequence spans 713 residues: Phosphoribosylformylglycinamidine synthase subunit PurL (713 aa).

Histidine 34 is an active-site residue. Residues tyrosine 37 and arginine 73 each contribute to the ATP site. Glutamate 75 is a binding site for Mg(2+). Substrate contacts are provided by residues serine 76–histidine 79 and arginine 98. Histidine 77 (proton acceptor) is an active-site residue. A Mg(2+)-binding site is contributed by aspartate 99. Glutamine 221 is a substrate binding site. Aspartate 249 serves as a coordination point for Mg(2+). Position 292–294 (glutamate 292–glutamine 294) interacts with substrate. Positions 474 and 511 each coordinate ATP. Substrate is bound at residue serine 514.

This sequence belongs to the FGAMS family. Monomer. Part of the FGAM synthase complex composed of 1 PurL, 1 PurQ and 2 PurS subunits.

The protein resides in the cytoplasm. The enzyme catalyses N(2)-formyl-N(1)-(5-phospho-beta-D-ribosyl)glycinamide + L-glutamine + ATP + H2O = 2-formamido-N(1)-(5-O-phospho-beta-D-ribosyl)acetamidine + L-glutamate + ADP + phosphate + H(+). Its pathway is purine metabolism; IMP biosynthesis via de novo pathway; 5-amino-1-(5-phospho-D-ribosyl)imidazole from N(2)-formyl-N(1)-(5-phospho-D-ribosyl)glycinamide: step 1/2. In terms of biological role, part of the phosphoribosylformylglycinamidine synthase complex involved in the purines biosynthetic pathway. Catalyzes the ATP-dependent conversion of formylglycinamide ribonucleotide (FGAR) and glutamine to yield formylglycinamidine ribonucleotide (FGAM) and glutamate. The FGAM synthase complex is composed of three subunits. PurQ produces an ammonia molecule by converting glutamine to glutamate. PurL transfers the ammonia molecule to FGAR to form FGAM in an ATP-dependent manner. PurS interacts with PurQ and PurL and is thought to assist in the transfer of the ammonia molecule from PurQ to PurL. This is Phosphoribosylformylglycinamidine synthase subunit PurL from Ignicoccus hospitalis (strain KIN4/I / DSM 18386 / JCM 14125).